We begin with the raw amino-acid sequence, 321 residues long: Putative zinc finger CCCH domain-containing protein 9 (321 aa).

2 disordered regions span residues 1–59 (MADA…PGKK) and 181–269 (REAE…NLQE). Residues 10 to 29 (EAERRSDETESRSIKEPKEK) are compositionally biased toward basic and acidic residues. The C3H1-type zinc-finger motif lies at 55 to 83 (RPGKKDCQFYLKNGLCRYRSSCRFNHPTQ). Positions 164-290 (TEWRFERERM…EARLRLEQIR (127 aa)) form a coiled coil. 2 stretches are compositionally biased toward basic and acidic residues: residues 181 to 224 (REAE…REAQ) and 231 to 244 (RQRD…REAQ).

The polypeptide is Putative zinc finger CCCH domain-containing protein 9 (Arabidopsis thaliana (Mouse-ear cress)).